A 431-amino-acid chain; its full sequence is Serine hydroxymethyltransferase 2 (431 aa).

Residues leucine 131 and 135–137 contribute to the (6S)-5,6,7,8-tetrahydrofolate site; that span reads GHL. Lysine 240 is modified (N6-(pyridoxal phosphate)lysine). Glutamate 256 contacts (6S)-5,6,7,8-tetrahydrofolate.

The protein belongs to the SHMT family. In terms of assembly, homodimer. The cofactor is pyridoxal 5'-phosphate.

It is found in the cytoplasm. The catalysed reaction is (6R)-5,10-methylene-5,6,7,8-tetrahydrofolate + glycine + H2O = (6S)-5,6,7,8-tetrahydrofolate + L-serine. Its pathway is one-carbon metabolism; tetrahydrofolate interconversion. It functions in the pathway amino-acid biosynthesis; glycine biosynthesis; glycine from L-serine: step 1/1. Its function is as follows. Catalyzes the reversible interconversion of serine and glycine with tetrahydrofolate (THF) serving as the one-carbon carrier. This reaction serves as the major source of one-carbon groups required for the biosynthesis of purines, thymidylate, methionine, and other important biomolecules. Also exhibits THF-independent aldolase activity toward beta-hydroxyamino acids, producing glycine and aldehydes, via a retro-aldol mechanism. The protein is Serine hydroxymethyltransferase 2 of Vibrio vulnificus (strain YJ016).